We begin with the raw amino-acid sequence, 291 residues long: 4-hydroxy-tetrahydrodipicolinate synthase (291 aa).

Thr45 provides a ligand contact to pyruvate. The active-site Proton donor/acceptor is Tyr133. Lys161 serves as the catalytic Schiff-base intermediate with substrate. A pyruvate-binding site is contributed by Ile203.

The protein belongs to the DapA family. As to quaternary structure, homotetramer; dimer of dimers.

The protein resides in the cytoplasm. It carries out the reaction L-aspartate 4-semialdehyde + pyruvate = (2S,4S)-4-hydroxy-2,3,4,5-tetrahydrodipicolinate + H2O + H(+). Its pathway is amino-acid biosynthesis; L-lysine biosynthesis via DAP pathway; (S)-tetrahydrodipicolinate from L-aspartate: step 3/4. In terms of biological role, catalyzes the condensation of (S)-aspartate-beta-semialdehyde [(S)-ASA] and pyruvate to 4-hydroxy-tetrahydrodipicolinate (HTPA). The chain is 4-hydroxy-tetrahydrodipicolinate synthase from Acidithiobacillus ferrooxidans (strain ATCC 23270 / DSM 14882 / CIP 104768 / NCIMB 8455) (Ferrobacillus ferrooxidans (strain ATCC 23270)).